The chain runs to 537 residues: Chaperonin GroEL (537 aa).

Residues 30-33 (TLGP), 87-91 (DGTTT), glycine 414, 477-479 (DAV), and aspartate 493 each bind ATP.

It belongs to the chaperonin (HSP60) family. Forms a cylinder of 14 subunits composed of two heptameric rings stacked back-to-back. Interacts with the co-chaperonin GroES.

It localises to the cytoplasm. The enzyme catalyses ATP + H2O + a folded polypeptide = ADP + phosphate + an unfolded polypeptide.. Functionally, together with its co-chaperonin GroES, plays an essential role in assisting protein folding. The GroEL-GroES system forms a nano-cage that allows encapsulation of the non-native substrate proteins and provides a physical environment optimized to promote and accelerate protein folding. This chain is Chaperonin GroEL, found in Coprothermobacter proteolyticus (strain ATCC 35245 / DSM 5265 / OCM 4 / BT).